The primary structure comprises 161 residues: MGEMIKVGMADMNVCKPPDSITTLGLGSCVGIVLYDPGKKVSGMVHVMLPDSTKIKNNENIAKFADTGIDELVRRLLVLGATRSSLVAKIAGGAQMFAFSSNNDMLRVGERNVEATKEKLNSLRIPILAQDTGLNYGRTIEFNPESSELLIKSVGKPQKKI.

It belongs to the CheD family.

It catalyses the reaction L-glutaminyl-[protein] + H2O = L-glutamyl-[protein] + NH4(+). Probably deamidates glutamine residues to glutamate on methyl-accepting chemotaxis receptors (MCPs), playing an important role in chemotaxis. The protein is Probable chemoreceptor glutamine deamidase CheD of Lachnoclostridium phytofermentans (strain ATCC 700394 / DSM 18823 / ISDg) (Clostridium phytofermentans).